We begin with the raw amino-acid sequence, 198 residues long: Recombination protein RecR (198 aa).

The segment at 57-72 adopts a C4-type zinc-finger fold; that stretch reads CSVCGHITENDPCYIC. Residues 80-175 enclose the Toprim domain; it reads SVICVVEDDK…KVTRLAQGLS (96 aa).

This sequence belongs to the RecR family.

May play a role in DNA repair. It seems to be involved in an RecBC-independent recombinational process of DNA repair. It may act with RecF and RecO. The protein is Recombination protein RecR of Staphylococcus aureus (strain MRSA252).